A 442-amino-acid polypeptide reads, in one-letter code: uncharacterized protein (442 aa).

Cysteine 43, cysteine 49, cysteine 52, and cysteine 130 together coordinate [4Fe-4S] cluster. Positions 273, 302, 323, and 372 each coordinate S-adenosyl-L-methionine. Cysteine 399 functions as the Nucleophile in the catalytic mechanism.

Belongs to the class I-like SAM-binding methyltransferase superfamily. RNA M5U methyltransferase family.

This is an uncharacterized protein from Protochlamydia amoebophila (strain UWE25).